The primary structure comprises 291 residues: Nitrogenase iron protein 1 (291 aa).

10 to 17 is a binding site for ATP; the sequence is GKGGIGKS. Residue Cys-98 coordinates [4Fe-4S] cluster. Residue Arg-101 is modified to ADP-ribosylarginine; by dinitrogenase reductase ADP-ribosyltransferase. Cys-133 is a binding site for [4Fe-4S] cluster.

Belongs to the NifH/BchL/ChlL family. As to quaternary structure, homodimer. [4Fe-4S] cluster is required as a cofactor. Post-translationally, the reversible ADP-ribosylation of Arg-101 inactivates the nitrogenase reductase and regulates nitrogenase activity.

The catalysed reaction is N2 + 8 reduced [2Fe-2S]-[ferredoxin] + 16 ATP + 16 H2O = H2 + 8 oxidized [2Fe-2S]-[ferredoxin] + 2 NH4(+) + 16 ADP + 16 phosphate + 6 H(+). In terms of biological role, the key enzymatic reactions in nitrogen fixation are catalyzed by the nitrogenase complex, which has 2 components: the iron protein (component 2) and a component 1 which is either a molybdenum-iron protein, a vanadium-iron, or an iron-iron protein. This Azotobacter chroococcum mcd 1 protein is Nitrogenase iron protein 1 (nifH1).